We begin with the raw amino-acid sequence, 474 residues long: Glutamate--tRNA ligase (474 aa).

Positions 18–28 (PSPTGFLHIGG) match the 'HIGH' region motif. The short motif at 244 to 248 (KLSKR) is the 'KMSKS' region element. Position 247 (K247) interacts with ATP.

Belongs to the class-I aminoacyl-tRNA synthetase family. Glutamate--tRNA ligase type 1 subfamily. In terms of assembly, monomer.

It localises to the cytoplasm. The enzyme catalyses tRNA(Glu) + L-glutamate + ATP = L-glutamyl-tRNA(Glu) + AMP + diphosphate. Functionally, catalyzes the attachment of glutamate to tRNA(Glu) in a two-step reaction: glutamate is first activated by ATP to form Glu-AMP and then transferred to the acceptor end of tRNA(Glu). In Caulobacter sp. (strain K31), this protein is Glutamate--tRNA ligase.